The sequence spans 381 residues: Endophilin-A homolog (381 aa).

Residues 1 to 21 are membrane-binding amphipathic helix; that stretch reads MSLSGLRKQFNKANQYLSETM. In terms of domain architecture, BAR spans 18–247; that stretch reads SETMGAAEPT…LGHRIKDAAA (230 aa). Residues 170–238 adopt a coiled-coil conformation; it reads CKKRQQRRDD…QCLENLQQQL (69 aa). The segment at 246 to 323 is disordered; sequence AARPREEHVP…PPPLSQQQKP (78 aa). Positions 260 to 271 are enriched in polar residues; that stretch reads ANESRTPRSSFR. Residues 305 to 317 show a composition bias toward pro residues; sequence YQGPPPGGLPPPL. The region spanning 320-379 is the SH3 domain; it reads QQKPQCRALFDFDAQSEGELDFKEGTLIELVSQIDENWYEGRVNGKTGLFPVTYVQVLVP.

It belongs to the endophilin family. As to quaternary structure, may form a homodimer (via the BAR domain). As to expression, expressed in neurons and posterior intestine.

The protein resides in the synapse. The protein localises to the cytoplasmic vesicle. It is found in the secretory vesicle. Its subcellular location is the synaptic vesicle. It localises to the membrane. Functionally, involved in synaptic vesicle (SV) recycling in neurons probably by regulating clathrin-mediated endocytosis. By controlling SV endocytosis, regulates the rate of excitatory postsynaptic currents (EPSCs) at neuromuscular junctions and thus locomotion. In a similar manner, involved in necrotic neuronal cell death induced by abnormal hyperactivation of ion channels. Plays a minor role in responses to mechanical stimuli. Plays a minor role in unc-26/synaptojanin localization to synapses. The protein is Endophilin-A homolog of Caenorhabditis elegans.